Here is a 247-residue protein sequence, read N- to C-terminus: Inhibitory synaptic factor 1 (247 aa).

Positions 30-65 (RAVIGQLEGILRDLKEVAKELKEVVEQIDRLTSDFE) form a coiled coil. Disordered stretches follow at residues 69 to 90 (DTDD…GGPL), 112 to 166 (ASTP…RDRV), and 180 to 217 (DDSE…GVRK). Polar residues predominate over residues 76-85 (GTVSSTSSSE).

Belongs to the INSYN1 family.

It localises to the postsynaptic density. In terms of biological role, may be a component of the protein machinery at the inhibitory synapses, probably acting as a scaffold. This Xenopus laevis (African clawed frog) protein is Inhibitory synaptic factor 1.